Reading from the N-terminus, the 199-residue chain is Pyridoxal 5'-phosphate synthase subunit PdxT (199 aa).

G52–S54 lines the L-glutamine pocket. Catalysis depends on C84, which acts as the Nucleophile. L-glutamine-binding positions include R115 and I143–R144. Active-site charge relay system residues include H179 and E181.

It belongs to the glutaminase PdxT/SNO family. In the presence of PdxS, forms a dodecamer of heterodimers. Only shows activity in the heterodimer.

The catalysed reaction is aldehydo-D-ribose 5-phosphate + D-glyceraldehyde 3-phosphate + L-glutamine = pyridoxal 5'-phosphate + L-glutamate + phosphate + 3 H2O + H(+). It catalyses the reaction L-glutamine + H2O = L-glutamate + NH4(+). It functions in the pathway cofactor biosynthesis; pyridoxal 5'-phosphate biosynthesis. Catalyzes the hydrolysis of glutamine to glutamate and ammonia as part of the biosynthesis of pyridoxal 5'-phosphate. The resulting ammonia molecule is channeled to the active site of PdxS. In Methanosarcina acetivorans (strain ATCC 35395 / DSM 2834 / JCM 12185 / C2A), this protein is Pyridoxal 5'-phosphate synthase subunit PdxT.